We begin with the raw amino-acid sequence, 70 residues long: Cold shock-like protein CspJ (70 aa).

A CSD domain is found at 7–67; that stretch reads GLVKWFNPEK…GPKGPSAVNV (61 aa).

The protein resides in the cytoplasm. The chain is Cold shock-like protein CspJ (cspJ) from Salmonella typhi.